Reading from the N-terminus, the 162-residue chain is NADH-quinone oxidoreductase subunit I (162 aa).

4Fe-4S ferredoxin-type domains lie at 52-82 and 93-122; these read LRRY…IEAG and VRYD…EGPN. [4Fe-4S] cluster is bound by residues C62, C65, C68, C72, C102, C105, C108, and C112.

It belongs to the complex I 23 kDa subunit family. NDH-1 is composed of 14 different subunits. Subunits NuoA, H, J, K, L, M, N constitute the membrane sector of the complex. The cofactor is [4Fe-4S] cluster.

The protein localises to the cell inner membrane. It catalyses the reaction a quinone + NADH + 5 H(+)(in) = a quinol + NAD(+) + 4 H(+)(out). Functionally, NDH-1 shuttles electrons from NADH, via FMN and iron-sulfur (Fe-S) centers, to quinones in the respiratory chain. The immediate electron acceptor for the enzyme in this species is believed to be ubiquinone. Couples the redox reaction to proton translocation (for every two electrons transferred, four hydrogen ions are translocated across the cytoplasmic membrane), and thus conserves the redox energy in a proton gradient. This is NADH-quinone oxidoreductase subunit I from Nitrobacter hamburgensis (strain DSM 10229 / NCIMB 13809 / X14).